The following is a 387-amino-acid chain: Exodeoxyribonuclease 7 large subunit (387 aa).

The protein belongs to the XseA family. In terms of assembly, heterooligomer composed of large and small subunits.

The protein localises to the cytoplasm. The enzyme catalyses Exonucleolytic cleavage in either 5'- to 3'- or 3'- to 5'-direction to yield nucleoside 5'-phosphates.. Bidirectionally degrades single-stranded DNA into large acid-insoluble oligonucleotides, which are then degraded further into small acid-soluble oligonucleotides. This Synechococcus sp. (strain CC9902) protein is Exodeoxyribonuclease 7 large subunit.